The chain runs to 128 residues: Glycine cleavage system H protein (128 aa).

Positions 24–106 constitute a Lipoyl-binding domain; the sequence is VYSVGITEHA…YTDGWLFSIK (83 aa). N6-lipoyllysine is present on Lys-65.

Belongs to the GcvH family. As to quaternary structure, the glycine cleavage system is composed of four proteins: P, T, L and H. (R)-lipoate serves as cofactor.

Functionally, the glycine cleavage system catalyzes the degradation of glycine. The H protein shuttles the methylamine group of glycine from the P protein to the T protein. This is Glycine cleavage system H protein from Yersinia enterocolitica serotype O:8 / biotype 1B (strain NCTC 13174 / 8081).